Reading from the N-terminus, the 150-residue chain is Large-conductance mechanosensitive channel (150 aa).

Transmembrane regions (helical) follow at residues 19–39 and 85–105; these read VGII…SDVL and GIFL…FMLI.

The protein belongs to the MscL family. Homopentamer.

The protein localises to the cell inner membrane. Channel that opens in response to stretch forces in the membrane lipid bilayer. May participate in the regulation of osmotic pressure changes within the cell. The protein is Large-conductance mechanosensitive channel of Chlorobium limicola (strain DSM 245 / NBRC 103803 / 6330).